The chain runs to 314 residues: 2,3-dihydroxyphenylpropionate/2,3-dihydroxicinnamic acid 1,2-dioxygenase (314 aa).

The active-site Proton donor is His-115. The active-site Proton acceptor is the His-179.

Belongs to the LigB/MhpB extradiol dioxygenase family. Homotetramer. The cofactor is Fe(2+).

It catalyses the reaction 3-(2,3-dihydroxyphenyl)propanoate + O2 = (2Z,4E)-2-hydroxy-6-oxonona-2,4-dienedioate + H(+). The enzyme catalyses (2E)-3-(2,3-dihydroxyphenyl)prop-2-enoate + O2 = (2Z,4E,7E)-2-hydroxy-6-oxonona-2,4,7-trienedioate + H(+). Its pathway is aromatic compound metabolism; 3-phenylpropanoate degradation. Functionally, catalyzes the non-heme iron(II)-dependent oxidative cleavage of 2,3-dihydroxyphenylpropionic acid and 2,3-dihydroxicinnamic acid into 2-hydroxy-6-ketononadienedioate and 2-hydroxy-6-ketononatrienedioate, respectively. The sequence is that of 2,3-dihydroxyphenylpropionate/2,3-dihydroxicinnamic acid 1,2-dioxygenase from Klebsiella pneumoniae subsp. pneumoniae (strain ATCC 700721 / MGH 78578).